The sequence spans 456 residues: Glutamyl-tRNA reductase (456 aa).

Substrate contacts are provided by residues 49–52 (TCNR), serine 109, 114–116 (EQQ), and glutamine 120. Cysteine 50 functions as the Nucleophile in the catalytic mechanism. An NADP(+)-binding site is contributed by 189 to 194 (GAGSMG).

It belongs to the glutamyl-tRNA reductase family. In terms of assembly, homodimer.

It catalyses the reaction (S)-4-amino-5-oxopentanoate + tRNA(Glu) + NADP(+) = L-glutamyl-tRNA(Glu) + NADPH + H(+). It participates in porphyrin-containing compound metabolism; protoporphyrin-IX biosynthesis; 5-aminolevulinate from L-glutamyl-tRNA(Glu): step 1/2. Its function is as follows. Catalyzes the NADPH-dependent reduction of glutamyl-tRNA(Glu) to glutamate 1-semialdehyde (GSA). The protein is Glutamyl-tRNA reductase of Mycolicibacterium vanbaalenii (strain DSM 7251 / JCM 13017 / BCRC 16820 / KCTC 9966 / NRRL B-24157 / PYR-1) (Mycobacterium vanbaalenii).